The following is a 104-amino-acid chain: Large ribosomal subunit protein bL21 (104 aa).

Belongs to the bacterial ribosomal protein bL21 family. Part of the 50S ribosomal subunit. Contacts protein L20.

In terms of biological role, this protein binds to 23S rRNA in the presence of protein L20. The protein is Large ribosomal subunit protein bL21 of Pseudomonas putida (strain GB-1).